Consider the following 172-residue polypeptide: Dehydratase cfoI (172 aa).

Residues H86 and H111 contribute to the active site.

This sequence belongs to the scytalone dehydratase family. In terms of assembly, homotrimer. Each subunit contains an active site, located in the central part of the hydrophobic core of the monomer, which functions independently.

It participates in secondary metabolite biosynthesis; flavonoid biosynthesis. Functionally, cytochrome P450 monooxygenase; part of the gene cluster that mediates the biosynthesis of chlorflavonin, a fungal flavonoid with acetolactate synthase inhibitory activity. Within the pathway, cfoI is responsible for the hydroxylation of the flavonoid skeleton at position C3 with cfoF. The pathway begins with the PKS-NRPS hybrid synthetase cfoA that uses benzoic acid or p-hydroxybenzoic acid as a starter unit with four rounds of chain elongation using malonyl-CoA to form the chalcone skeleton. Then, a new type of chalcone isomerase, cfoK, catalyzes the conversion of the chalcone into a flavanone by a histidine-mediated oxa-Michael addition mechanism. The desaturation of flavanone to flavone is catalyzed by a new type of flavone synthase, the flavin mononucleotide (FMN)-dependent oxidoreductase cfoJ. Monooxygenases cfoF, cfoG, and P450 cfoH are responsible for the hydroxylation of the flavonoid skeleton at sites C3, C8, and C2', respectively. Like cfoF, the dehydratase cfoI plays also a role in the hydroxylation of position C3. Methyltransferases cfoB, cfoC, and cfoD then catalyze the methylation of C7-OH, C8-OH, and C3-OH, respectively. Finally, the monooxygenase cfoE is responsible for the chlorination of flavonoid at position C3'. The protein is Dehydratase cfoI of Aspergillus candidus.